Consider the following 461-residue polypeptide: tRNA modification GTPase MnmE (461 aa).

Residues arginine 23, glutamate 88, and arginine 127 each contribute to the (6S)-5-formyl-5,6,7,8-tetrahydrofolate site. In terms of domain architecture, TrmE-type G spans 223 to 383 (GLNTVIVGKP…LKECIKNLFF (161 aa)). Asparagine 233 contacts K(+). GTP contacts are provided by residues 233–238 (NVGKSS), 252–258 (TEIPGTT), and 277–280 (DTAG). Residue serine 237 participates in Mg(2+) binding. Threonine 252, isoleucine 254, and threonine 257 together coordinate K(+). Threonine 258 is a Mg(2+) binding site. Lysine 461 lines the (6S)-5-formyl-5,6,7,8-tetrahydrofolate pocket.

The protein belongs to the TRAFAC class TrmE-Era-EngA-EngB-Septin-like GTPase superfamily. TrmE GTPase family. As to quaternary structure, homodimer. Heterotetramer of two MnmE and two MnmG subunits. The cofactor is K(+).

The protein localises to the cytoplasm. In terms of biological role, exhibits a very high intrinsic GTPase hydrolysis rate. Involved in the addition of a carboxymethylaminomethyl (cmnm) group at the wobble position (U34) of certain tRNAs, forming tRNA-cmnm(5)s(2)U34. The chain is tRNA modification GTPase MnmE from Clostridium botulinum (strain Langeland / NCTC 10281 / Type F).